A 343-amino-acid polypeptide reads, in one-letter code: Histone H1.8 (343 aa).

Residues 1 to 32 (MAPGSIASSDTSSSTSSSSTSSASSASAEGSS) are compositionally biased toward low complexity. 2 disordered regions span residues 1–50 (MAPG…VRAP) and 122–343 (ATGS…EAEG). The H15 domain maps to 52–130 (RHPPVLRMVL…GATGSFKLVP (79 aa)). Positions 132 to 142 (DKRKIPPRKTA) are enriched in basic residues. Composition is skewed to basic and acidic residues over residues 150–183 (EGKD…ERAA), 199–219 (QTKD…RPDK), and 235–247 (KVKE…ADTK). Positions 161–176 (KKDPANTVEVKKGSRK) match the Nuclear localization signal motif. The span at 253 to 265 (QPGSQSSKSTVTK) shows a compositional bias: polar residues.

This sequence belongs to the histone H1/H5 family. Oocyte (at protein level).

Its subcellular location is the cytoplasm. It localises to the nucleus. The protein localises to the chromosome. In terms of biological role, may play a key role in the control of gene expression during oogenesis and early embryogenesis, presumably through the perturbation of chromatin structure. Essential for meiotic maturation of germinal vesicle-stage oocytes. The somatic type linker histone H1c is rapidly replaced by H1oo in a donor nucleus transplanted into an oocyte. The greater mobility of H1oo as compared to H1c may contribute to this rapid replacement and increased instability of the embryonic chromatin structure. The rapid replacement of H1c with H1oo may play an important role in nuclear remodeling. In Bos taurus (Bovine), this protein is Histone H1.8.